A 394-amino-acid polypeptide reads, in one-letter code: Zinc-regulated GTPase metalloprotein activator 1 (394 aa).

A psi-PxLVp motif motif is present at residues 16–23 (EDCPELVP). 48–55 (GYLGAGKT) is a GTP binding site. Cysteine 106, cysteine 108, and cysteine 109 together coordinate Zn(2+). Positions 106–109 (CLCC) match the CXCC motif motif. GTP-binding positions include 109-113 (CSVKD) and 202-205 (NKTD). The CobW C-terminal domain occupies 272–375 (IVTVTFDVPG…ILQQLFITAV (104 aa)).

The protein belongs to the SIMIBI class G3E GTPase family. ZNG1 subfamily.

The protein resides in the nucleus. The catalysed reaction is GTP + H2O = GDP + phosphate + H(+). Its function is as follows. Zinc chaperone that directly transfers zinc cofactor to target metalloproteins, thereby activating them. Catalyzes zinc insertion into the active site of methionine aminopeptidase METAP1, which function to cleave the initiator methionine from polypeptides during or after protein translation. Mechanistically, the N-terminal psi-PxLVp motif binds to the C6H2-type zinc finger of inactive form of METAP1. After formation of the docked complex, zinc is transferred from the CXCC motif in the GTPase domain of ZNG1 to the zinc binding site in the peptidase domain of METAP1 in a process requiring GTP hydrolysis. GTP/GDP exchange is required for release of active METAP1. This chain is Zinc-regulated GTPase metalloprotein activator 1 (Zng1), found in Rattus norvegicus (Rat).